A 510-amino-acid polypeptide reads, in one-letter code: Anaerobic nitric oxide reductase transcription regulator NorR (510 aa).

A Sigma-54 factor interaction domain is found at 188–417; it reads IIGNSQGMRT…LEHVIKRAAV (230 aa). Residues 216 to 223 and 279 to 288 each bind ATP; these read GETGVGKE and ADGGTLFLDE. The H-T-H motif DNA-binding region spans 486–505; the sequence is WAATARQLELDSGNLHRLAK.

It participates in nitrogen metabolism; nitric oxide reduction. Its function is as follows. Required for the expression of anaerobic nitric oxide (NO) reductase, acts as a transcriptional activator for at least the norVW operon. Activation also requires sigma-54. The sequence is that of Anaerobic nitric oxide reductase transcription regulator NorR from Vibrio vulnificus (strain YJ016).